The primary structure comprises 177 residues: MAETQTVNPMRKLRLEKVTVNIGVGEAGERLQKAYQLLQELTGVKPVYTIAKRTIREFGVRKGAPIGVKVTLRGKKAEEFLNKVLAAVGHRIKASSFDEYGNVSFGIAEHVLIPGTRYDPEIGIFGMDVAITLVRPGFRVARRRRKKAHIPKRHRTVSKEEAMEFLKQNFNVTIVEG.

This sequence belongs to the universal ribosomal protein uL5 family. As to quaternary structure, part of the 50S ribosomal subunit; contacts the 5S rRNA and probably tRNA. Forms a bridge to the 30S subunit in the 70S ribosome.

Its function is as follows. This is one of the proteins that bind and probably mediate the attachment of the 5S RNA into the large ribosomal subunit, where it forms part of the central protuberance. In the 70S ribosome it contacts protein S13 of the 30S subunit (bridge B1b), connecting the 2 subunits; this bridge is implicated in subunit movement. May contact the P site tRNA; the 5S rRNA and some of its associated proteins might help stabilize positioning of ribosome-bound tRNAs. This chain is Large ribosomal subunit protein uL5, found in Sulfurisphaera tokodaii (strain DSM 16993 / JCM 10545 / NBRC 100140 / 7) (Sulfolobus tokodaii).